Consider the following 189-residue polypeptide: Peptidyl-tRNA hydrolase (189 aa).

F15 contributes to the tRNA binding site. Residue H20 is the Proton acceptor of the active site. Y65, N67, and N113 together coordinate tRNA.

Belongs to the PTH family. Monomer.

The protein resides in the cytoplasm. It carries out the reaction an N-acyl-L-alpha-aminoacyl-tRNA + H2O = an N-acyl-L-amino acid + a tRNA + H(+). Functionally, hydrolyzes ribosome-free peptidyl-tRNAs (with 1 or more amino acids incorporated), which drop off the ribosome during protein synthesis, or as a result of ribosome stalling. Its function is as follows. Catalyzes the release of premature peptidyl moieties from peptidyl-tRNA molecules trapped in stalled 50S ribosomal subunits, and thus maintains levels of free tRNAs and 50S ribosomes. This is Peptidyl-tRNA hydrolase from Phytoplasma australiense.